Reading from the N-terminus, the 125-residue chain is Putative superoxide reductase (125 aa).

6 residues coordinate Fe cation: E12, H14, H40, H46, C110, and H113.

This sequence belongs to the desulfoferrodoxin family. It depends on Fe cation as a cofactor.

It catalyses the reaction reduced [rubredoxin] + superoxide + 2 H(+) = oxidized [rubredoxin] + H2O2. In terms of biological role, uses electrons from reduced NADP, by way of rubredoxin and an oxidoreductase, to catalyze the reduction of superoxide to hydrogen peroxide. The chain is Putative superoxide reductase from Archaeoglobus fulgidus (strain ATCC 49558 / DSM 4304 / JCM 9628 / NBRC 100126 / VC-16).